The following is a 283-amino-acid chain: Cardiolipin synthase (CMP-forming) (283 aa).

Transmembrane regions (helical) follow at residues 83–103 (PFIG…LFAF), 155–175 (VSIA…ALFI), and 209–229 (LSKW…LLLL).

This sequence belongs to the CDP-alcohol phosphatidyltransferase class-I family. May be found in a large complex. The cofactor is Mg(2+).

The protein resides in the mitochondrion inner membrane. The enzyme catalyses a CDP-1,2-diacyl-sn-glycerol + a 1,2-diacyl-sn-glycero-3-phospho-(1'-sn-glycerol) = a cardiolipin + CMP + H(+). Its function is as follows. Catalyzes the synthesis of cardiolipin (CL) (diphosphatidylglycerol) by specifically transferring a phosphatidyl group from CDP-diacylglycerol to phosphatidylglycerol (PG). CL is a key phospholipid in mitochondrial membranes and plays important roles in maintaining the functional integrity and dynamics of mitochondria under both optimal and stress conditions. This Saccharomyces cerevisiae (strain ATCC 204508 / S288c) (Baker's yeast) protein is Cardiolipin synthase (CMP-forming) (CRD1).